Here is a 536-residue protein sequence, read N- to C-terminus: CTP synthase (536 aa).

The segment at 1-267 (MTKFIFVTGG…DDIVIKRLQL (267 aa)) is amidoligase domain. Serine 13 is a binding site for CTP. Serine 13 contacts UTP. An ATP-binding site is contributed by 14–19 (SLGKGI). Position 54 (tyrosine 54) interacts with L-glutamine. Position 71 (aspartate 71) interacts with ATP. Aspartate 71 and glutamate 141 together coordinate Mg(2+). Residues 148 to 150 (DIE), 188 to 193 (KTKPTQ), and lysine 224 contribute to the CTP site. UTP contacts are provided by residues 188 to 193 (KTKPTQ) and lysine 224. 240 to 242 (RDA) provides a ligand contact to ATP. The region spanning 293 to 535 (TIGLVGKYVS…IEASLKYQQN (243 aa)) is the Glutamine amidotransferase type-1 domain. Glycine 355 lines the L-glutamine pocket. Cysteine 382 serves as the catalytic Nucleophile; for glutamine hydrolysis. Residues 383 to 386 (LGMQ), glutamate 406, and arginine 463 each bind L-glutamine. Residues histidine 508 and glutamate 510 contribute to the active site.

Belongs to the CTP synthase family. As to quaternary structure, homotetramer.

The catalysed reaction is UTP + L-glutamine + ATP + H2O = CTP + L-glutamate + ADP + phosphate + 2 H(+). It catalyses the reaction L-glutamine + H2O = L-glutamate + NH4(+). It carries out the reaction UTP + NH4(+) + ATP = CTP + ADP + phosphate + 2 H(+). It participates in pyrimidine metabolism; CTP biosynthesis via de novo pathway; CTP from UDP: step 2/2. With respect to regulation, allosterically activated by GTP, when glutamine is the substrate; GTP has no effect on the reaction when ammonia is the substrate. The allosteric effector GTP functions by stabilizing the protein conformation that binds the tetrahedral intermediate(s) formed during glutamine hydrolysis. Inhibited by the product CTP, via allosteric rather than competitive inhibition. Its function is as follows. Catalyzes the ATP-dependent amination of UTP to CTP with either L-glutamine or ammonia as the source of nitrogen. Regulates intracellular CTP levels through interactions with the four ribonucleotide triphosphates. The sequence is that of CTP synthase from Staphylococcus aureus (strain COL).